The sequence spans 122 residues: Large ribosomal subunit protein uL18 (122 aa).

The span at 1-19 (MSKLSRKQQTQKRHKRLRR) shows a compositional bias: basic residues. The interval 1–27 (MSKLSRKQQTQKRHKRLRRNLSGTESR) is disordered.

It belongs to the universal ribosomal protein uL18 family. As to quaternary structure, part of the 50S ribosomal subunit; part of the 5S rRNA/L5/L18/L25 subcomplex. Contacts the 5S and 23S rRNAs.

Its function is as follows. This is one of the proteins that bind and probably mediate the attachment of the 5S RNA into the large ribosomal subunit, where it forms part of the central protuberance. The polypeptide is Large ribosomal subunit protein uL18 (Prochlorococcus marinus (strain NATL1A)).